We begin with the raw amino-acid sequence, 143 residues long: Nucleoside diphosphate kinase (143 aa).

The ATP site is built by Lys-11, Phe-59, Arg-87, Thr-93, Arg-104, and Asn-114. Catalysis depends on His-117, which acts as the Pros-phosphohistidine intermediate.

This sequence belongs to the NDK family. In terms of assembly, homotetramer. Requires Mg(2+) as cofactor.

It localises to the cytoplasm. It catalyses the reaction a 2'-deoxyribonucleoside 5'-diphosphate + ATP = a 2'-deoxyribonucleoside 5'-triphosphate + ADP. It carries out the reaction a ribonucleoside 5'-diphosphate + ATP = a ribonucleoside 5'-triphosphate + ADP. Functionally, major role in the synthesis of nucleoside triphosphates other than ATP. The ATP gamma phosphate is transferred to the NDP beta phosphate via a ping-pong mechanism, using a phosphorylated active-site intermediate. This Shewanella pealeana (strain ATCC 700345 / ANG-SQ1) protein is Nucleoside diphosphate kinase.